Here is an 878-residue protein sequence, read N- to C-terminus: RNA-directed RNA polymerase (878 aa).

Glycine 258–threonine 265 lines the GTP pocket. The 201-residue stretch at leucine 397 to alanine 597 folds into the RdRp catalytic domain. Residues glycine 845–glutamine 878 form a disordered region.

Interacts with VP3 in the cytoplasm. Post-translationally, may exist in multiple phosphorylated forms.

Its subcellular location is the virion. The catalysed reaction is RNA(n) + a ribonucleoside 5'-triphosphate = RNA(n+1) + diphosphate. RNA-dependent RNA polymerase which is found both free and covalently attached to the genomic RNA. May also contain guanylyl and methyl transferase activities. In Gallus gallus (Chicken), this protein is RNA-directed RNA polymerase (VP1).